The sequence spans 2033 residues: Envoplakin (2033 aa).

Low complexity predominate over residues 1-27 (MFKGLSKGSQGKGSPKGSPAKGSPKGS). Disordered regions lie at residues 1-37 (MFKGLSKGSQGKGSPKGSPAKGSPKGSPSRHSRAATQ) and 65-85 (QQDRLNSEQSQALQHQQETGR). Positions 1-841 (MFKGLSKGSQ…LEPTLAVSAP (841 aa)) are globular 1. The tract at residues 12-28 (KGSPKGSPAKGSPKGSP) is 4 X 4 AA tandem repeats of K-G-S-P. Positions 71–84 (SEQSQALQHQQETG) are enriched in polar residues. Residues 229–330 (YTHLQGCTRQ…LCICQETQLQ (102 aa)) form a Spectrin repeat. Positions 388 to 401 (TERATGDLQRRSRD) are enriched in basic and acidic residues. Disordered stretches follow at residues 388–418 (TERATGDLQRRSRDVAPLPQRRNPPQQPLHV) and 891–916 (SEDIRRTHDAKQGSESPAQAGRESEA). An SH3 domain is found at 413-470 (QQPLHVDSICDWDSGEVQLLQGERYKLVDNTDPHAWVVQGPGGETKRAPAACFCIPAP). The central fibrous rod domain stretch occupies residues 842 to 1673 (KRPRVAPLQE…AKVSREELSQ (832 aa)). A coiled-coil region spans residues 845–1135 (RVAPLQESIQ…AISSVEPKVI (291 aa)). Over residues 891–902 (SEDIRRTHDAKQ) the composition is skewed to basic and acidic residues. Residues 1185 to 1226 (KQRPKVQLQERVHEIFQVDPETEQEITRLKAKLQEMAGKRSG) form a Plectin 1 repeat. Serine 1575 is modified (phosphoserine). Positions 1614 to 1623 (QEESKLLSQK) are enriched in low complexity. The interval 1614–1636 (QEESKLLSQKTESERQKAAQRGQ) is disordered. Residues 1674–2033 (ETQTRETNLS…ASPTVPRSLR (360 aa)) form a globular 2 region. One copy of the Plectin 2 repeat lies at 1678 to 1713 (RETNLSTKISILEPETGKDMSPYEAYKRGIIDRGQY). Serine 1799 bears the Phosphoserine mark. 5 Plectin repeats span residues 1818–1855 (LGLGDDSFPIAGIYDTTTDNKCSIKTAVAKNMLDPITG), 1856–1893 (QKLLEAQAATGGIVDLLSRERYSVHKAMERGLIENTST), 1894–1931 (QRLLNAQKAFTGIEDPVTKKRLSVGEAVQKGWMPRESV), 1932–1969 (LPHLQVQHLTGGLIDPKRTGRIPIQQALLSGMISEELA), and 1970–2007 (QLLQDESSYEKDLTDPISKERLSYKEAMGRCRKDPLSG). Position 2025 is a phosphoserine (serine 2025).

It belongs to the plakin or cytolinker family. As to quaternary structure, may form a homodimer or a heterodimer with PPL. In terms of tissue distribution, exclusively expressed in stratified squamous epithelia.

The protein resides in the cell junction. It is found in the desmosome. It localises to the cornified envelope. The protein localises to the cytoplasm. Its subcellular location is the cytoskeleton. In terms of biological role, component of the cornified envelope of keratinocytes. May link the cornified envelope to desmosomes and intermediate filaments. This is Envoplakin (EVPL) from Homo sapiens (Human).